Reading from the N-terminus, the 435-residue chain is 5-methylthioadenosine/S-adenosylhomocysteine deaminase (435 aa).

Histidine 65 and histidine 67 together coordinate Zn(2+). The substrate site is built by glutamate 94, arginine 150, and histidine 189. Histidine 216 serves as a coordination point for Zn(2+). Residues glutamate 219 and aspartate 304 each contribute to the substrate site. Position 304 (aspartate 304) interacts with Zn(2+).

It belongs to the metallo-dependent hydrolases superfamily. MTA/SAH deaminase family. Zn(2+) serves as cofactor.

The enzyme catalyses S-adenosyl-L-homocysteine + H2O + H(+) = S-inosyl-L-homocysteine + NH4(+). The catalysed reaction is S-methyl-5'-thioadenosine + H2O + H(+) = S-methyl-5'-thioinosine + NH4(+). Catalyzes the deamination of 5-methylthioadenosine and S-adenosyl-L-homocysteine into 5-methylthioinosine and S-inosyl-L-homocysteine, respectively. Is also able to deaminate adenosine. This chain is 5-methylthioadenosine/S-adenosylhomocysteine deaminase, found in Bacillus cereus (strain B4264).